A 258-amino-acid chain; its full sequence is Large ribosomal subunit protein bL28m (258 aa).

The N-terminal 21 residues, 1-21 (MQKIFRPFQLTRGFTSSVKNF), are a transit peptide targeting the mitochondrion.

The protein belongs to the bacterial ribosomal protein bL28 family. As to quaternary structure, component of the mitochondrial large ribosomal subunit (mt-LSU). Mature yeast 74S mitochondrial ribosomes consist of a small (37S) and a large (54S) subunit. The 37S small subunit contains a 15S ribosomal RNA (15S mt-rRNA) and 34 different proteins. The 54S large subunit contains a 21S rRNA (21S mt-rRNA) and 46 different proteins.

It is found in the mitochondrion. Functionally, component of the mitochondrial ribosome (mitoribosome), a dedicated translation machinery responsible for the synthesis of mitochondrial genome-encoded proteins, including at least some of the essential transmembrane subunits of the mitochondrial respiratory chain. The mitoribosomes are attached to the mitochondrial inner membrane and translation products are cotranslationally integrated into the membrane. The protein is Large ribosomal subunit protein bL28m (MRPL24) of Saccharomyces cerevisiae (strain ATCC 204508 / S288c) (Baker's yeast).